The chain runs to 475 residues: BTB/POZ domain-containing protein 10 (475 aa).

Residues methionine 1–cysteine 143 form a disordered region. Residues leucine 22–lysine 31 show a composition bias toward basic residues. Residues glycine 57–glutamate 80 show a composition bias toward basic and acidic residues. Residues serine 81–threonine 94 are compositionally biased toward polar residues. Over residues histidine 97–serine 107 the composition is skewed to basic and acidic residues. The span at serine 108–serine 142 shows a compositional bias: low complexity. Residues alanine 146–leucine 475 form an interaction with AKT family members region. The BTB domain maps to glutamate 167–aspartate 241. Residues proline 456–leucine 475 are disordered.

In terms of assembly, interacts (via C-terminal 330-amino-acid region) with AKT1; AKT2 and AKT3. Interacts with PPP2CA and PPP1CA.

The protein localises to the nucleus. The protein resides in the cytoplasm. Functionally, plays a major role as an activator of AKT family members by inhibiting PPP2CA-mediated dephosphorylation, thereby keeping AKTs activated. Plays a role in preventing motor neuronal death and in accelerating the growth of pancreatic beta cells. The sequence is that of BTB/POZ domain-containing protein 10 (BTBD10) from Pongo abelii (Sumatran orangutan).